Consider the following 1340-residue polypeptide: Early transcription factor large subunit homolog (1340 aa).

Belongs to the asfivirus G1340L family.

The protein resides in the virion. Putative initation factor. The sequence is that of Early transcription factor large subunit homolog from African swine fever virus (isolate Tick/South Africa/Pretoriuskop Pr4/1996) (ASFV).